Here is a 112-residue protein sequence, read N- to C-terminus: NADH-quinone oxidoreductase subunit K (112 aa).

3 consecutive transmembrane segments (helical) span residues 14-34 (LEGY…GALI), 39-59 (VVVF…LVAF), and 76-96 (LIIA…LAIF).

This sequence belongs to the complex I subunit 4L family. In terms of assembly, NDH-1 is composed of 14 different subunits. Subunits NuoA, H, J, K, L, M, N constitute the membrane sector of the complex.

Its subcellular location is the cell membrane. The enzyme catalyses a quinone + NADH + 5 H(+)(in) = a quinol + NAD(+) + 4 H(+)(out). NDH-1 shuttles electrons from NADH, via FMN and iron-sulfur (Fe-S) centers, to quinones in the respiratory chain. The immediate electron acceptor for the enzyme in this species is believed to be a menaquinone. Couples the redox reaction to proton translocation (for every two electrons transferred, four hydrogen ions are translocated across the cytoplasmic membrane), and thus conserves the redox energy in a proton gradient. This Rubrobacter xylanophilus (strain DSM 9941 / JCM 11954 / NBRC 16129 / PRD-1) protein is NADH-quinone oxidoreductase subunit K.